The sequence spans 593 residues: Early nodule-specific protein 2 (593 aa).

Over residues 71–110 (EKPPIYEPPPTEEPPPVYKPPIIHPPPNYKPPAHTPPIYH) the composition is skewed to pro residues. Residues 71 to 593 (EKPPIYEPPP…GHYPPYKKNQ (523 aa)) are disordered. 2 stretches are compositionally biased toward basic and acidic residues: residues 123-138 (PYEK…EYQP) and 166-195 (PPYE…EKPP). A compositionally biased stretch (pro residues) spans 196–210 (PEYTPPYEKPPPEYQ). 2 stretches are compositionally biased toward basic and acidic residues: residues 227–265 (PPHE…EKPP) and 275–292 (PPHE…EKPP). A compositionally biased stretch (pro residues) spans 294–306 (VHPPPEYQPPYLK). 4 stretches are compositionally biased toward basic and acidic residues: residues 339 to 350 (PPHEKPPHEHPP), 360 to 372 (PPPE…ENPP), 382 to 394 (PPHE…EHPP), and 404 to 421 (PPPE…EHPP). Positions 422-435 (PEYQPPQENPPPEY) are enriched in pro residues. The span at 506–522 (PRHEKPMPKYQPPHEKL) shows a compositional bias: basic and acidic residues. Residues 532–558 (KTPPPQAYHPPPPIYHHPPFHPPPHVK) are compositionally biased toward pro residues.

Belongs to the nodulin 75 family.

Its function is as follows. Involved in early stages of root nodule development. The sequence is that of Early nodule-specific protein 2 from Medicago truncatula (Barrel medic).